We begin with the raw amino-acid sequence, 101 residues long: Small ribosomal subunit protein bS6 (101 aa).

It belongs to the bacterial ribosomal protein bS6 family.

Binds together with bS18 to 16S ribosomal RNA. The sequence is that of Small ribosomal subunit protein bS6 from Staphylococcus saprophyticus subsp. saprophyticus (strain ATCC 15305 / DSM 20229 / NCIMB 8711 / NCTC 7292 / S-41).